The sequence spans 84 residues: U7-ctenitoxin-Pn1a (84 aa).

The N-terminal stretch at 1 to 17 (MKLCILLVVLLITVVRA) is a signal peptide. Positions 18 to 38 (EEDILENEAEDISPAIKERSA) are excised as a propeptide. 4 disulfides stabilise this stretch: Cys41/Cys56, Cys48/Cys61, Cys55/Cys78, and Cys63/Cys76.

As to expression, expressed by the venom gland.

It localises to the secreted. Functionally, antagonist of L-type calcium channels (Cav1/CACNA1). Causes paralysis in the posterior limbs and gradual decreases in movement and aggression during 24 hours at dose levels of 5 ug per mouse. The polypeptide is U7-ctenitoxin-Pn1a (Phoneutria nigriventer (Brazilian armed spider)).